We begin with the raw amino-acid sequence, 520 residues long: Protein-export membrane protein SecD (520 aa).

The next 6 helical transmembrane spans lie at 10–30, 364–384, 391–411, 417–437, 461–481, and 483–503; these read IILL…PTLA, DSLL…FLRY, LPMI…AAGI, LSVI…LVII, FWVI…LAIL, and LGDL…GVLI.

This sequence belongs to the SecD/SecF family. SecD subfamily. As to quaternary structure, part of the protein translocation apparatus. Forms a complex with SecF.

It is found in the cell membrane. Its function is as follows. Involved in protein export. The protein is Protein-export membrane protein SecD of Haloquadratum walsbyi (strain DSM 16790 / HBSQ001).